Consider the following 70-residue polypeptide: Large ribosomal subunit protein eL38 (70 aa).

This sequence belongs to the eukaryotic ribosomal protein eL38 family.

The protein is Large ribosomal subunit protein eL38 (RpL38) of Anopheles gambiae (African malaria mosquito).